Reading from the N-terminus, the 403-residue chain is Tyrosine--tRNA ligase (403 aa).

The short motif at 42-51 (PTAPDLHLGH) is the 'HIGH' region element. The short motif at 226–230 (KMSKS) is the 'KMSKS' region element. Lysine 229 contributes to the ATP binding site. Residues 339 to 400 (LRIASLLTAA…GKRNFARVSL (62 aa)) form the S4 RNA-binding domain.

This sequence belongs to the class-I aminoacyl-tRNA synthetase family. TyrS type 2 subfamily. As to quaternary structure, homodimer.

Its subcellular location is the cytoplasm. The enzyme catalyses tRNA(Tyr) + L-tyrosine + ATP = L-tyrosyl-tRNA(Tyr) + AMP + diphosphate + H(+). Catalyzes the attachment of tyrosine to tRNA(Tyr) in a two-step reaction: tyrosine is first activated by ATP to form Tyr-AMP and then transferred to the acceptor end of tRNA(Tyr). The chain is Tyrosine--tRNA ligase from Xanthomonas oryzae pv. oryzae (strain MAFF 311018).